The sequence spans 430 residues: DD-carboxypeptidase/endopeptidase Mpg (430 aa).

Positions 295, 299, and 375 each coordinate Zn(2+).

Belongs to the peptidase M23B family. Monomer. It depends on Zn(2+) as a cofactor. Likely to be synthesized as a proenzyme. The cleavage of the N-terminal domain is probably required for the activation of the enzyme.

The protein resides in the cell outer membrane. Its activity is regulated as follows. Peptidoglycan (PG) degradation activity is completely inhibited by zinc chelating EDTA and phenanthroline. In terms of biological role, has both endopeptidase and DD-carboxypeptidase activities. Degrades cell wall peptidoglycan (PG) to allow consummate expression of pili. Degrades N.gonorrhoeae and E.coli PG side chains in vitro. Required for proper piliation, which in turn is required for normal colony morphology, resistance to H(2)O(2) damage and defense against killing by human polymorphonuclear leukocytes (PMNs). Involved in type IV pilus biogenesis. Involved in resistance against non-oxidative killing by adherent CXCL8/IL8-primed human PMNs. Protects from killing by PMN-produced antimicrobial factors, which kill by a mechanism completely independent of reactive oxygen species (ROS) production of the PMNs. Provides protection against oxidative damage caused by peroxides H(2)O(2) and cumene hydroperoxide in vitro. The protein is DD-carboxypeptidase/endopeptidase Mpg of Neisseria gonorrhoeae (strain ATCC 700825 / FA 1090).